Here is a 600-residue protein sequence, read N- to C-terminus: Elongation factor 4 (600 aa).

One can recognise a tr-type G domain in the interval 5 to 187 (KYIRNFSIIA…AIINKLPSPK (183 aa)). Residues 17 to 22 (DHGKST) and 134 to 137 (NKID) each bind GTP.

It belongs to the TRAFAC class translation factor GTPase superfamily. Classic translation factor GTPase family. LepA subfamily.

The protein resides in the cell inner membrane. It carries out the reaction GTP + H2O = GDP + phosphate + H(+). Its function is as follows. Required for accurate and efficient protein synthesis under certain stress conditions. May act as a fidelity factor of the translation reaction, by catalyzing a one-codon backward translocation of tRNAs on improperly translocated ribosomes. Back-translocation proceeds from a post-translocation (POST) complex to a pre-translocation (PRE) complex, thus giving elongation factor G a second chance to translocate the tRNAs correctly. Binds to ribosomes in a GTP-dependent manner. The chain is Elongation factor 4 from Rickettsia typhi (strain ATCC VR-144 / Wilmington).